The primary structure comprises 156 residues: Small ribosomal subunit protein uS7 (156 aa).

Belongs to the universal ribosomal protein uS7 family. Part of the 30S ribosomal subunit. Contacts proteins S9 and S11.

Its function is as follows. One of the primary rRNA binding proteins, it binds directly to 16S rRNA where it nucleates assembly of the head domain of the 30S subunit. Is located at the subunit interface close to the decoding center, probably blocks exit of the E-site tRNA. This Methylocella silvestris (strain DSM 15510 / CIP 108128 / LMG 27833 / NCIMB 13906 / BL2) protein is Small ribosomal subunit protein uS7.